Reading from the N-terminus, the 913-residue chain is Alanine--tRNA ligase (913 aa).

Zn(2+) contacts are provided by H608, H612, C711, and H715.

The protein belongs to the class-II aminoacyl-tRNA synthetase family. The cofactor is Zn(2+).

Its subcellular location is the cytoplasm. It catalyses the reaction tRNA(Ala) + L-alanine + ATP = L-alanyl-tRNA(Ala) + AMP + diphosphate. Its function is as follows. Catalyzes the attachment of alanine to tRNA(Ala) in a two-step reaction: alanine is first activated by ATP to form Ala-AMP and then transferred to the acceptor end of tRNA(Ala). Also edits incorrectly charged Ser-tRNA(Ala) and Gly-tRNA(Ala) via its editing domain. This is Alanine--tRNA ligase from Methanocorpusculum labreanum (strain ATCC 43576 / DSM 4855 / Z).